Here is a 106-residue protein sequence, read N- to C-terminus: UPF0145 protein Cthe_0398 (106 aa).

It belongs to the UPF0145 family.

In Acetivibrio thermocellus (strain ATCC 27405 / DSM 1237 / JCM 9322 / NBRC 103400 / NCIMB 10682 / NRRL B-4536 / VPI 7372) (Clostridium thermocellum), this protein is UPF0145 protein Cthe_0398.